The chain runs to 355 residues: Peptide chain release factor 1 (355 aa).

At glutamine 233 the chain carries N5-methylglutamine.

It belongs to the prokaryotic/mitochondrial release factor family. Methylated by PrmC. Methylation increases the termination efficiency of RF1.

The protein localises to the cytoplasm. In terms of biological role, peptide chain release factor 1 directs the termination of translation in response to the peptide chain termination codons UAG and UAA. The polypeptide is Peptide chain release factor 1 (Clostridium tetani (strain Massachusetts / E88)).